The sequence spans 494 residues: Aldehyde dehydrogenase (494 aa).

223 to 228 (GSTTAG) contributes to the NAD(+) binding site. Residues Glu-245 and Cys-279 contribute to the active site.

It belongs to the aldehyde dehydrogenase family.

It catalyses the reaction an aldehyde + NAD(+) + H2O = a carboxylate + NADH + 2 H(+). The protein operates within mycotoxin biosynthesis. Aldehyde dehydrogenase; part of the gene cluster that mediates the biosynthesis of the selective antifungal agent ascochitine, an o-quinone methide that plays a possible protective role against other microbial competitors in nature and is considered to be important for pathogenicity of legume-associated Didymella species. The pathway probably begins with the synthesis of a keto-aldehyde intermediate by the ascochitine non-reducing polyketide synthase pksAC from successive condensations of 4 malonyl-CoA units, presumably with a simple acetyl-CoA starter unit. Release of the keto-aldehyde intermediate is consistent with the presence of the C-terminal reductive release domain. The HR-PKS (orf7) probably makes a diketide starter unit which is passed to the non-reducing polyketide synthase pksAC for further extension, producing ascochital and ascochitine. The aldehyde dehydrogenase (orf1), the 2-oxoglutarate-dependent dioxygenase (orf3) and the dehydrogenase (orf9) are probably involved in subsequent oxidations of methyl groups to the carboxylic acid of the heterocyclic ring. The ascochitine gene cluster also includes a gene encoding a short peptide with a cupin domain (orf2) that is often found in secondary metabolite gene clusters and which function has still to be determined. This is Aldehyde dehydrogenase from Didymella fabae (Leaf and pod spot disease fungus).